We begin with the raw amino-acid sequence, 442 residues long: Protein bag of marbles (442 aa).

Residues 201 to 250 are required for interaction with ubiquitin; sequence FDMPVKSTMPKSLNVRYQLQVLCTKVERFLVQQRRTLEANRHFDFEKYDE. The segment at 408 to 442 is disordered; the sequence is VSMEQPSASEEEFEETEEVPSSPPRHTGRVPRFRS. Over residues 416-425 the composition is skewed to acidic residues; the sequence is SEEEFEETEE. Over residues 433 to 442 the composition is skewed to basic residues; the sequence is HTGRVPRFRS.

Interacts (via central region) with ubiquitin. Interacts (via C-terminus) with otu (via OTU domain); the interaction enhances otu aggregation into amyloid-like structures and enhances its deubiquitinase activity. Together with otu interacts with CycA/cyclin-A (via C-terminus); the interaction stabilizes CycA by promoting and enhancing otu dependent deubiquitination of CycA. Together with otu interacts with Traf6. Part of a complex composed of at least tut, bam and bgcn; complex formation does not require RNA. Interacts (via C-terminus) with bgcn; the interaction is direct and is not disrupted by eIF4A. Interacts with eIF4A (via multiple contacts); the interaction is direct and is not disrupted by bgcn. Interacts (via N-terminus) with tut; the interaction is direct and mediates the interaction between tut and bgcn. As part of the bam-bgcn-tut complex associates with twin; may recruit the CCR4-NOT1 deadenylation complex to mRNA 3'-UTRs to mediate post-transcriptional regulation of expression. Part of a complex composed of at least mei-P26, bam, bgcn and Sxl; this complex is involved in translational repression of nanos mRNA. Post-translationally, ubiquitinated (C-terminal region). In cystoblasts and/or very early cystocytes in testis (at protein level); expression levels are regulated by mei-P26. In cystoblasts and/or very early cystocytes in ovary. Expressed in the gut; expression levels increase with age.

It localises to the cytoplasm. Its function is as follows. Regulatory component of a deubiquitinase complex consisting of bam and otu. The complex deubiquitinates K63-linked polyubiquitinated proteins, antagonizing the ubiquitination activity of Traf6 and regulating the IMD immune signaling pathway. Otu-bam deubiquitinase activity is regulated by Traf6 dependent immune signaling regulation of bam expression levels; this forms a feedback loop that regulates the IMD immune signaling pathway and balances gut immune activity during aging. The complex deubiquitinates and stabilizes CycA/cyclin-A to regulate CycA-dependent differentiation. Required to initiate both male and female gametogenesis. Part of a complex with bgcn involved in 3'-UTR-dependent translational repression of a subset of mRNAs, including those for mei-P26, nanos and shg/E-cadherin. Repression of mei-P26 is targeted by let-7 miRNA. Involved in a regulatory cascade with mei-P26 to control the progression of cystocytes through transit amplification and the switch to spermatocyte differentiation; mei-P26 facilitates bam accumulation, which in turn represses translation of mei-P26. Forms a complex with tut and bgcn involved in 3'-UTR-dependent post-transcriptional repression of several 3'-RNA processing factors, which promotes germline stem cell lineage differentiation and mitosis-to-meiosis transition. The protein is Protein bag of marbles of Drosophila melanogaster (Fruit fly).